A 453-amino-acid polypeptide reads, in one-letter code: Bifunctional protein GlmU (453 aa).

The interval Met1–Arg227 is pyrophosphorylase. UDP-N-acetyl-alpha-D-glucosamine-binding positions include Leu8 to Gly11, Lys22, Gln73, Gly78 to Thr79, Ser100 to Asp102, Gly137, Glu152, Asn167, and Asn225. A Mg(2+)-binding site is contributed by Asp102. Residue Asn225 participates in Mg(2+) binding. The tract at residues Gln228–Glu248 is linker. Residues Gly249 to Lys453 are N-acetyltransferase. Residues Arg331 and Lys349 each coordinate UDP-N-acetyl-alpha-D-glucosamine. The Proton acceptor role is filled by His361. UDP-N-acetyl-alpha-D-glucosamine is bound by residues Tyr364 and Asn375. Residues Ala378, Asn384–Tyr385, Ser403, Ala421, and Arg438 each bind acetyl-CoA. Residues Pro430–Lys453 form a disordered region.

It in the N-terminal section; belongs to the N-acetylglucosamine-1-phosphate uridyltransferase family. The protein in the C-terminal section; belongs to the transferase hexapeptide repeat family. In terms of assembly, homotrimer. Mg(2+) serves as cofactor.

The protein localises to the cytoplasm. It catalyses the reaction alpha-D-glucosamine 1-phosphate + acetyl-CoA = N-acetyl-alpha-D-glucosamine 1-phosphate + CoA + H(+). It carries out the reaction N-acetyl-alpha-D-glucosamine 1-phosphate + UTP + H(+) = UDP-N-acetyl-alpha-D-glucosamine + diphosphate. The protein operates within nucleotide-sugar biosynthesis; UDP-N-acetyl-alpha-D-glucosamine biosynthesis; N-acetyl-alpha-D-glucosamine 1-phosphate from alpha-D-glucosamine 6-phosphate (route II): step 2/2. Its pathway is nucleotide-sugar biosynthesis; UDP-N-acetyl-alpha-D-glucosamine biosynthesis; UDP-N-acetyl-alpha-D-glucosamine from N-acetyl-alpha-D-glucosamine 1-phosphate: step 1/1. It functions in the pathway bacterial outer membrane biogenesis; LPS lipid A biosynthesis. In terms of biological role, catalyzes the last two sequential reactions in the de novo biosynthetic pathway for UDP-N-acetylglucosamine (UDP-GlcNAc). The C-terminal domain catalyzes the transfer of acetyl group from acetyl coenzyme A to glucosamine-1-phosphate (GlcN-1-P) to produce N-acetylglucosamine-1-phosphate (GlcNAc-1-P), which is converted into UDP-GlcNAc by the transfer of uridine 5-monophosphate (from uridine 5-triphosphate), a reaction catalyzed by the N-terminal domain. The protein is Bifunctional protein GlmU of Nitrosococcus oceani (strain ATCC 19707 / BCRC 17464 / JCM 30415 / NCIMB 11848 / C-107).